The sequence spans 431 residues: Guanine nucleotide exchange factor rei-2 (431 aa).

Residues 1–21 (MDETATSSEVTETFVSDPTTR) show a composition bias toward polar residues. A disordered region spans residues 1 to 28 (MDETATSSEVTETFVSDPTTRQFEEDGH). 2 coiled-coil regions span residues 149 to 171 (EVLN…AESL) and 214 to 247 (LEAQ…RISE). Residues 249–298 (IHEERSTGSLESAVSSDQEDQKSDFKSSESLPGNPPPYAPTAPPPYEDKY) form a disordered region. Over residues 255-264 (TGSLESAVSS) the composition is skewed to polar residues. Over residues 281-293 (GNPPPYAPTAPPP) the composition is skewed to pro residues.

Belongs to the SH3BP5 family. As to quaternary structure, interacts with rab-11.1. Binds preferentially to the GDP-bound form of rab-11.1.

Guanine nucleotide exchange factor for Rab GTPase Rab-11.1. May spatially and temporally regulate the distribution of Rab-11.1 to target membranes during embryogenesis. May play a role in cytokinesis, probably by targeting rab-11.1 to the cleavage furrows. This Caenorhabditis elegans protein is Guanine nucleotide exchange factor rei-2.